The primary structure comprises 186 residues: MNSLQNHLLIAMPSLQDTFFERSVIYLCEHDEKGAMGLMINRPIGIDVNELLKQMELDEEPDPITSLGSAVLIGGPVNQERGFVLHTPQTNWNNSQSLTDEIMLTTSRDVLTSLGTDAAPENFIVTLGYAGWSKDQLEQELAENTWLSIPATKELLFDIGFNDRWQQATESLGFDIWQLSNQSGHA.

This sequence belongs to the UPF0301 (AlgH) family.

In Shewanella woodyi (strain ATCC 51908 / MS32), this protein is UPF0301 protein Swoo_1337.